The following is a 220-amino-acid chain: Thiopurine S-methyltransferase (220 aa).

Positions 10, 45, 66, and 123 each coordinate S-adenosyl-L-methionine.

This sequence belongs to the class I-like SAM-binding methyltransferase superfamily. TPMT family.

Its subcellular location is the cytoplasm. The catalysed reaction is S-adenosyl-L-methionine + a thiopurine = S-adenosyl-L-homocysteine + a thiopurine S-methylether.. This chain is Thiopurine S-methyltransferase, found in Pseudomonas syringae pv. syringae (strain B728a).